The following is a 352-amino-acid chain: Nicotinate-nucleotide--dimethylbenzimidazole phosphoribosyltransferase (352 aa).

E316 acts as the Proton acceptor in catalysis.

It belongs to the CobT family.

The enzyme catalyses 5,6-dimethylbenzimidazole + nicotinate beta-D-ribonucleotide = alpha-ribazole 5'-phosphate + nicotinate + H(+). It participates in nucleoside biosynthesis; alpha-ribazole biosynthesis; alpha-ribazole from 5,6-dimethylbenzimidazole: step 1/2. Catalyzes the synthesis of alpha-ribazole-5'-phosphate from nicotinate mononucleotide (NAMN) and 5,6-dimethylbenzimidazole (DMB). The chain is Nicotinate-nucleotide--dimethylbenzimidazole phosphoribosyltransferase from Clostridium acetobutylicum (strain ATCC 824 / DSM 792 / JCM 1419 / IAM 19013 / LMG 5710 / NBRC 13948 / NRRL B-527 / VKM B-1787 / 2291 / W).